Reading from the N-terminus, the 515-residue chain is Adenine DNA glycosylase (515 aa).

Basic residues predominate over residues 1-24 (MKKLQASVRSHKKQPANHKRRRTR). The segment at 1 to 38 (MKKLQASVRSHKKQPANHKRRRTRALSSSQAKPSSLDG) is disordered. The Proton donor/acceptor role is filled by Glu105. [4Fe-4S] cluster-binding residues include Cys261, Cys268, Cys271, and Cys277. Residues 335–466 (PREEYSATCV…AMKKVFRMYE (132 aa)) enclose the Nudix hydrolase domain. The short motif at 376–398 (VTLEPSEQHQHKALLQELQRWCG) is the Nudix box element. Positions 468–494 (HRQGTRKGSKRSQVCPPSSRKKPSLGQ) are disordered.

Belongs to the Nth/MutY family. The cofactor is [4Fe-4S] cluster. As to expression, expressed in heart, lung, liver, intestine, brain and thymus.

It is found in the nucleus. The protein resides in the mitochondrion. It catalyses the reaction Hydrolyzes free adenine bases from 7,8-dihydro-8-oxoguanine:adenine mismatched double-stranded DNA, leaving an apurinic site.. Involved in oxidative DNA damage repair. Initiates repair of A*oxoG to C*G by removing the inappropriately paired adenine base from the DNA backbone. Possesses both adenine and 2-OH-A DNA glycosylase activities. The polypeptide is Adenine DNA glycosylase (Mutyh) (Mus musculus (Mouse)).